The primary structure comprises 338 residues: Lipoate-protein ligase A (338 aa).

Residues 29–216 (PATQRVLFLW…AFFAHYGERV (188 aa)) form the BPL/LPL catalytic domain. Residues Arg-71, 76–79 (GAVF), and Lys-134 each bind ATP. Lys-134 contacts (R)-lipoate.

The protein belongs to the LplA family. Monomer.

The protein localises to the cytoplasm. It carries out the reaction L-lysyl-[lipoyl-carrier protein] + (R)-lipoate + ATP = N(6)-[(R)-lipoyl]-L-lysyl-[lipoyl-carrier protein] + AMP + diphosphate + H(+). It functions in the pathway protein modification; protein lipoylation via exogenous pathway; protein N(6)-(lipoyl)lysine from lipoate: step 1/2. The protein operates within protein modification; protein lipoylation via exogenous pathway; protein N(6)-(lipoyl)lysine from lipoate: step 2/2. Its function is as follows. Catalyzes both the ATP-dependent activation of exogenously supplied lipoate to lipoyl-AMP and the transfer of the activated lipoyl onto the lipoyl domains of lipoate-dependent enzymes. The chain is Lipoate-protein ligase A from Salmonella dublin (strain CT_02021853).